The sequence spans 324 residues: MKINLDRTSSGFCIGVQGTIHVAEEKLAAKETLFSLGDVVHNEVEVKRLENLGLTTIDEAVFKELQNTSVLIRAHGEPPETYATAERNKLDITDTTCPVVSKLQRTARLLCQLGYQVIIYGKHTHPEVIGINGHCSNRAVIIKHADLSDPEELKTLDTTIKTALISQTTMDVPGFYELKTNLEKRFAESDETAGKPWTAIRDIDITAAMTGIGTMPRTVFKDTICRQVSSRNKKLHDFALANSCVIFVAGRKSSNGQVLFGICRSANPRSYFIEDIEDLEDSWFRDNEGSPVESIGICGATSTPMWLLEKVAEFIDGRFNHRDA.

C13 serves as a coordination point for [4Fe-4S] cluster. Positions 41 and 75 each coordinate (2E)-4-hydroxy-3-methylbut-2-enyl diphosphate. 2 residues coordinate dimethylallyl diphosphate: H41 and H75. Isopentenyl diphosphate is bound by residues H41 and H75. C97 lines the [4Fe-4S] cluster pocket. (2E)-4-hydroxy-3-methylbut-2-enyl diphosphate is bound at residue H125. H125 lines the dimethylallyl diphosphate pocket. H125 is a binding site for isopentenyl diphosphate. E127 acts as the Proton donor in catalysis. Position 168 (T168) interacts with (2E)-4-hydroxy-3-methylbut-2-enyl diphosphate. C225 contributes to the [4Fe-4S] cluster binding site. (2E)-4-hydroxy-3-methylbut-2-enyl diphosphate-binding residues include S253, S254, N255, and S302. The dimethylallyl diphosphate site is built by S253, S254, N255, and S302. Residues S253, S254, N255, and S302 each contribute to the isopentenyl diphosphate site.

Belongs to the IspH family. The cofactor is [4Fe-4S] cluster.

The catalysed reaction is isopentenyl diphosphate + 2 oxidized [2Fe-2S]-[ferredoxin] + H2O = (2E)-4-hydroxy-3-methylbut-2-enyl diphosphate + 2 reduced [2Fe-2S]-[ferredoxin] + 2 H(+). The enzyme catalyses dimethylallyl diphosphate + 2 oxidized [2Fe-2S]-[ferredoxin] + H2O = (2E)-4-hydroxy-3-methylbut-2-enyl diphosphate + 2 reduced [2Fe-2S]-[ferredoxin] + 2 H(+). It functions in the pathway isoprenoid biosynthesis; dimethylallyl diphosphate biosynthesis; dimethylallyl diphosphate from (2E)-4-hydroxy-3-methylbutenyl diphosphate: step 1/1. The protein operates within isoprenoid biosynthesis; isopentenyl diphosphate biosynthesis via DXP pathway; isopentenyl diphosphate from 1-deoxy-D-xylulose 5-phosphate: step 6/6. Catalyzes the conversion of 1-hydroxy-2-methyl-2-(E)-butenyl 4-diphosphate (HMBPP) into a mixture of isopentenyl diphosphate (IPP) and dimethylallyl diphosphate (DMAPP). Acts in the terminal step of the DOXP/MEP pathway for isoprenoid precursor biosynthesis. In Chlorobium limicola (strain DSM 245 / NBRC 103803 / 6330), this protein is 4-hydroxy-3-methylbut-2-enyl diphosphate reductase.